A 398-amino-acid chain; its full sequence is Lysophosphatidylserine lipase ABHD12 (398 aa).

Positions 1 to 16 (MRKRTEPVALEHERRT) are enriched in basic and acidic residues. Residues 1 to 24 (MRKRTEPVALEHERRTASGSPSAG) form a disordered region. Over 1–74 (MRKRTEPVAL…RKGLCFRLRK (74 aa)) the chain is Cytoplasmic. Residues 75-95 (ILFFVLGLYVAIPFLIKLCPG) traverse the membrane as a helical segment. Over 96-398 (IQAKLIFLNF…LGKSEPGRQH (303 aa)) the chain is Extracellular. Asparagine 123 is a glycosylation site (N-linked (GlcNAc...) asparagine). Serine 246 serves as the catalytic Nucleophile. Active-site charge relay system residues include aspartate 333 and histidine 372.

This sequence belongs to the serine esterase family.

It is found in the endoplasmic reticulum membrane. The catalysed reaction is 1-(9Z-octadecenoyl)-sn-glycero-3-phospho-L-serine + H2O = sn-glycero-3-phospho-L-serine + (9Z)-octadecenoate + H(+). The enzyme catalyses 1-(9Z-octadecenoyl)-sn-glycero-3-phospho-(1'-sn-glycerol) + H2O = sn-glycero-3-phospho-(1'-sn-glycerol) + (9Z)-octadecenoate + H(+). It catalyses the reaction 1-(9Z-octadecenoyl)-sn-glycero-3-phospho-(1D-myo-inositol) + H2O = sn-glycero-3-phospho-1D-myo-inositol + (9Z)-octadecenoate + H(+). It carries out the reaction 1-(9Z-octadecenoyl)-sn-glycero-3-phosphoethanolamine + H2O = sn-glycero-3-phosphoethanolamine + (9Z)-octadecenoate + H(+). The catalysed reaction is 1-(9Z-octadecenoyl)-sn-glycero-3-phosphocholine + H2O = 1-(9Z-octadecenoyl)-sn-glycerol + phosphocholine + H(+). The enzyme catalyses 2-(9Z-octadecenoyl)-glycerol + H2O = glycerol + (9Z)-octadecenoate + H(+). It catalyses the reaction 1-hexadecanoyl-sn-glycero-3-phospho-L-serine + H2O = sn-glycero-3-phospho-L-serine + hexadecanoate + H(+). It carries out the reaction 2-(5Z,8Z,11Z,14Z-eicosatetraenoyl)-glycerol + H2O = glycerol + (5Z,8Z,11Z,14Z)-eicosatetraenoate + H(+). The catalysed reaction is Hydrolyzes glycerol monoesters of long-chain fatty acids.. The enzyme catalyses 1-decanoylglycerol + H2O = decanoate + glycerol + H(+). It catalyses the reaction 1-dodecanoylglycerol + H2O = dodecanoate + glycerol + H(+). It carries out the reaction 1-tetradecanoylglycerol + H2O = tetradecanoate + glycerol + H(+). The catalysed reaction is 2-hexadecanoylglycerol + H2O = glycerol + hexadecanoate + H(+). The enzyme catalyses 1-(9Z-octadecenoyl)-glycerol + H2O = glycerol + (9Z)-octadecenoate + H(+). It catalyses the reaction 2-(9Z,12Z-octadecadienoyl)-glycerol + H2O = (9Z,12Z)-octadecadienoate + glycerol + H(+). It carries out the reaction 1-(5Z,8Z,11Z,14Z-eicosatetraenoyl)-glycerol + H2O = glycerol + (5Z,8Z,11Z,14Z)-eicosatetraenoate + H(+). The catalysed reaction is 1-(9Z,12Z-octadecadienoyl)-glycerol + H2O = (9Z,12Z)-octadecadienoate + glycerol + H(+). The enzyme catalyses 1-hexadecanoylglycerol + H2O = glycerol + hexadecanoate + H(+). It catalyses the reaction 1-octadecanoylglycerol + H2O = octadecanoate + glycerol + H(+). It carries out the reaction 1-octadecanoyl-2-(9,10-epoxyoctadecanoyl)-sn-glycero-3-phospho-L-serine + H2O = 9,10-epoxyoctadecanoate + 1-octadecanoyl-sn-glycero-3-phosphoserine + H(+). The catalysed reaction is 1-octadecanoyl-2-(10-hydroxyoctadecanoyl)-sn-glycero-3-phospho-L-serine + H2O = 1-octadecanoyl-sn-glycero-3-phosphoserine + 10-hydroxyoctadecanoate + H(+). The enzyme catalyses 1-hexadecanoyl-2-(10-hydroxyoctadecanoyl)-sn-glycero-3-phospho-L-serine + H2O = 10-hydroxyoctadecanoate + 1-hexadecanoyl-sn-glycero-3-phospho-L-serine + H(+). In terms of biological role, lysophosphatidylserine (LPS) lipase that mediates the hydrolysis of lysophosphatidylserine, a class of signaling lipids that regulates immunological and neurological processes. Represents a major lysophosphatidylserine lipase in the brain, thereby playing a key role in the central nervous system. Also able to hydrolyze oxidized phosphatidylserine; oxidized phosphatidylserine is produced in response to severe inflammatory stress and constitutes a proapoptotic 'eat me' signal. Also has monoacylglycerol (MAG) lipase activity: hydrolyzes 2-arachidonoylglycerol (2-AG), thereby acting as a regulator of endocannabinoid signaling pathways. Has a strong preference for very-long-chain lipid substrates; substrate specificity is likely due to improved catalysis and not improved substrate binding. This chain is Lysophosphatidylserine lipase ABHD12, found in Bos taurus (Bovine).